The following is a 123-amino-acid chain: MPTINQLIRHERKKVVKRKKTPALQGCPQRRGVCTRVYTTTPKKPNSALRKVARVRLTNGLEVTAYIPGEGHNLQEHSVVLIRGGRVKDLPGVRYHIIRGTLDTSGVQDRRQRRSKYGAKRPK.

Residue Asp89 is modified to 3-methylthioaspartic acid. The tract at residues 102–123 (LDTSGVQDRRQRRSKYGAKRPK) is disordered. Positions 111–123 (RQRRSKYGAKRPK) are enriched in basic residues.

It belongs to the universal ribosomal protein uS12 family. As to quaternary structure, part of the 30S ribosomal subunit. Contacts proteins S8 and S17. May interact with IF1 in the 30S initiation complex.

Functionally, with S4 and S5 plays an important role in translational accuracy. In terms of biological role, interacts with and stabilizes bases of the 16S rRNA that are involved in tRNA selection in the A site and with the mRNA backbone. Located at the interface of the 30S and 50S subunits, it traverses the body of the 30S subunit contacting proteins on the other side and probably holding the rRNA structure together. The combined cluster of proteins S8, S12 and S17 appears to hold together the shoulder and platform of the 30S subunit. The polypeptide is Small ribosomal subunit protein uS12 (Lawsonia intracellularis (strain PHE/MN1-00)).